The primary structure comprises 466 residues: Ribulose bisphosphate carboxylase large chain (466 aa).

K5 bears the N6,N6,N6-trimethyllysine mark. 2 residues coordinate substrate: N114 and T164. The Proton acceptor role is filled by K166. K168 provides a ligand contact to substrate. Mg(2+) is bound by residues K192, D194, and E195. Residue K192 is modified to N6-carboxylysine. H285 serves as the catalytic Proton acceptor. Substrate contacts are provided by R286, H318, and S370.

Belongs to the RuBisCO large chain family. Type I subfamily. Heterohexadecamer of 8 large chains and 8 small chains; disulfide-linked. The disulfide link is formed within the large subunit homodimers. Requires Mg(2+) as cofactor. In terms of processing, the disulfide bond which can form in the large chain dimeric partners within the hexadecamer appears to be associated with oxidative stress and protein turnover.

The protein resides in the plastid. Its subcellular location is the chloroplast. The enzyme catalyses 2 (2R)-3-phosphoglycerate + 2 H(+) = D-ribulose 1,5-bisphosphate + CO2 + H2O. It carries out the reaction D-ribulose 1,5-bisphosphate + O2 = 2-phosphoglycolate + (2R)-3-phosphoglycerate + 2 H(+). RuBisCO catalyzes two reactions: the carboxylation of D-ribulose 1,5-bisphosphate, the primary event in carbon dioxide fixation, as well as the oxidative fragmentation of the pentose substrate in the photorespiration process. Both reactions occur simultaneously and in competition at the same active site. The protein is Ribulose bisphosphate carboxylase large chain of Aesculus pavia (Red buckeye).